We begin with the raw amino-acid sequence, 785 residues long: E3 UFM1-protein ligase 1 homolog (785 aa).

Residues 404–482 (NASFQDQDDD…AGGGGGNKKT (79 aa)) form a disordered region.

The protein belongs to the UFL1 family.

Functionally, E3 UFM1-protein ligase that mediates ufmylation of target proteins. The sequence is that of E3 UFM1-protein ligase 1 homolog from Drosophila persimilis (Fruit fly).